Here is a 201-residue protein sequence, read N- to C-terminus: Adenylyl-sulfate kinase (201 aa).

Position 35-42 (35-42) interacts with ATP; it reads GLSGSGKS. Ser-109 acts as the Phosphoserine intermediate in catalysis.

This sequence belongs to the APS kinase family.

It carries out the reaction adenosine 5'-phosphosulfate + ATP = 3'-phosphoadenylyl sulfate + ADP + H(+). Its pathway is sulfur metabolism; hydrogen sulfide biosynthesis; sulfite from sulfate: step 2/3. Its function is as follows. Catalyzes the synthesis of activated sulfate. The polypeptide is Adenylyl-sulfate kinase (Salmonella typhi).